The sequence spans 343 residues: Ribosomal RNA small subunit methyltransferase C (343 aa).

It belongs to the methyltransferase superfamily. RsmC family. As to quaternary structure, monomer.

Its subcellular location is the cytoplasm. The enzyme catalyses guanosine(1207) in 16S rRNA + S-adenosyl-L-methionine = N(2)-methylguanosine(1207) in 16S rRNA + S-adenosyl-L-homocysteine + H(+). Its function is as follows. Specifically methylates the guanine in position 1207 of 16S rRNA in the 30S particle. The polypeptide is Ribosomal RNA small subunit methyltransferase C (Escherichia fergusonii (strain ATCC 35469 / DSM 13698 / CCUG 18766 / IAM 14443 / JCM 21226 / LMG 7866 / NBRC 102419 / NCTC 12128 / CDC 0568-73)).